We begin with the raw amino-acid sequence, 329 residues long: Nuclear pore complex protein NUP35 (329 aa).

Disordered regions lie at residues 48-105 and 123-167; these read NFGG…GKGK and VSGS…PPRE. Residues 123 to 139 show a composition bias toward polar residues; sequence VSGSPSWWSQSKAGSST. The region spanning 183 to 264 is the RRM Nup35-type domain; it reads LDEEEWVTVY…KPVDPIQKQA (82 aa). The tract at residues 271–315 is disordered; it reads NQGFMPLPPPSSTRNTARPLSRPQYLQNGSAFSPQPSGGAMASPS. The segment covering 282–306 has biased composition (polar residues); the sequence is STRNTARPLSRPQYLQNGSAFSPQP.

The protein belongs to the Nup35 family. In terms of assembly, part of the nuclear pore complex (NPC). The NPC has an eight-fold symmetrical structure comprising a central transport channel and two rings, the cytoplasmic and nuclear rings, to which eight filaments are attached. The cytoplasmic filaments have loose ends, while the nuclear filaments are joined in a distal ring, forming a nuclear basket. NPCs are highly dynamic in configuration and composition, and can be devided in 3 subcomplexes, the NUP62 subcomplex, the NUP107-160 subcomplex and the NUP93 subcomplex, containing approximately 30 different nucleoporin proteins.

The protein localises to the nucleus. It is found in the nuclear pore complex. The chain is Nuclear pore complex protein NUP35 from Arabidopsis thaliana (Mouse-ear cress).